Reading from the N-terminus, the 20-residue chain is TQSTGTSQTIAVGLWGGPDN.

The segment covering 1-10 has biased composition (polar residues); sequence TQSTGTSQTI. Residues 1 to 20 form a disordered region; sequence TQSTGTSQTIAVGLWGGPDN.

The protein belongs to the jacalin lectin family. Tetramer of four alpha chains associated with two or four beta chains.

Functionally, alpha-methyl-D-mannoside and D-mannose specific lectin. Binds IgA. The sequence is that of Agglutinin beta-2 chain isoform 1 from Morus nigra (Black mulberry).